The chain runs to 1222 residues: ATP-dependent helicase/nuclease subunit A (1222 aa).

Residues glutamine 39–glutamine 495 enclose the UvrD-like helicase ATP-binding domain. Alanine 60 to threonine 67 contacts ATP. The 287-residue stretch at glutamine 524–glycine 810 folds into the UvrD-like helicase C-terminal domain.

The protein belongs to the helicase family. AddA subfamily. In terms of assembly, heterodimer of AddA and AddB/RexB. It depends on Mg(2+) as a cofactor.

The catalysed reaction is Couples ATP hydrolysis with the unwinding of duplex DNA by translocating in the 3'-5' direction.. It carries out the reaction ATP + H2O = ADP + phosphate + H(+). Its function is as follows. The heterodimer acts as both an ATP-dependent DNA helicase and an ATP-dependent, dual-direction single-stranded exonuclease. Recognizes the chi site generating a DNA molecule suitable for the initiation of homologous recombination. The AddA nuclease domain is required for chi fragment generation; this subunit has the helicase and 3' -&gt; 5' nuclease activities. This chain is ATP-dependent helicase/nuclease subunit A, found in Streptococcus pyogenes serotype M4 (strain MGAS10750).